A 514-amino-acid chain; its full sequence is 2,3-bisphosphoglycerate-independent phosphoglycerate mutase (514 aa).

Mn(2+) is bound by residues Asp-14 and Ser-64. The active-site Phosphoserine intermediate is Ser-64. Residues His-125, 155 to 156 (RD), Arg-187, Arg-193, 263 to 266 (RADR), and Lys-336 contribute to the substrate site. Mn(2+) contacts are provided by Asp-403, His-407, Asp-444, His-445, and His-463.

This sequence belongs to the BPG-independent phosphoglycerate mutase family. Monomer. Mn(2+) is required as a cofactor.

It carries out the reaction (2R)-2-phosphoglycerate = (2R)-3-phosphoglycerate. Its pathway is carbohydrate degradation; glycolysis; pyruvate from D-glyceraldehyde 3-phosphate: step 3/5. Insensitive to vanadate. Functionally, catalyzes the interconversion of 2-phosphoglycerate (2-PGA) and 3-phosphoglycerate (3-PGA). In Escherichia coli (strain K12), this protein is 2,3-bisphosphoglycerate-independent phosphoglycerate mutase.